Consider the following 1094-residue polypeptide: Probable arabinosyltransferase C (1094 aa).

A run of 13 helical transmembrane segments spans residues Ile28–Leu50, Ala232–Leu251, Pro264–Phe286, Ser341–Ser360, Thr373–Leu392, Ile431–Ile453, Arg466–Phe488, Ser530–Leu552, Ser565–Thr582, Trp586–Val608, Thr620–Tyr642, Trp657–Phe679, and Leu700–Ser722. Low complexity predominate over residues Gly817–Gly831. Positions Gly817–Arg836 are disordered.

The protein belongs to the emb family.

It is found in the cell membrane. Functionally, arabinosyl transferase responsible for the polymerization of arabinose into the arabinan of arabinogalactan. The protein is Probable arabinosyltransferase C (embC) of Mycobacterium tuberculosis (strain ATCC 25618 / H37Rv).